Consider the following 282-residue polypeptide: MISMNPIMIRNNLSRSSSPAAPPTTNHSSTVDYFSIKPKLSLDTNSQSDSNSTQSNNNEDTHSEQSDYNSYTHNQYYDSDDDEDDFDIRDQLLDPFDKITLSNCNEEYYSPLTPFDGQTTSPQDSIISSKSSNKSTTVVPSPQFQLTLPKLTTYSFLIVDDNIINLKILNRILLKLFPKCHIVQIQDSKLVKDLLHKQSFDSIFIDIEMPDVNGIDIAQFVRQDTKFDNMGMVAVTTRNSTQDLELFKQCGIDFTFHKPLNYSLDFMANSIDDIIITRKNKI.

Low complexity-rich tracts occupy residues 12-30 (NLSR…HSST) and 41-58 (SLDT…SNNN). 3 disordered regions span residues 12–31 (NLSR…SSTV), 41–84 (SLDT…DDED), and 112–139 (LTPF…TTVV). Polar residues predominate over residues 66-77 (SDYNSYTHNQYY). The segment covering 125–139 (SIISSKSSNKSTTVV) has biased composition (low complexity). In terms of domain architecture, Response regulatory spans 155-273 (SFLIVDDNII…LDFMANSIDD (119 aa)). Asp206 is subject to 4-aspartylphosphate.

In terms of biological role, required for stress adaptation, morphogenesis and virulence. In Candida albicans (strain WO-1) (Yeast), this protein is Stress response regulator protein 1 (SRR1).